A 157-amino-acid polypeptide reads, in one-letter code: Chromophore lyase CpcS/CpeS 1 (157 aa).

The protein belongs to the CpcS/CpeS biliprotein lyase family.

It is found in the plastid. The protein localises to the organellar chromatophore. Its function is as follows. Covalently attaches a chromophore to Cys residue(s) of phycobiliproteins. The chain is Chromophore lyase CpcS/CpeS 1 from Paulinella chromatophora.